The chain runs to 301 residues: Aquaporin-10 (301 aa).

The Cytoplasmic portion of the chain corresponds to 1–22 (MVFTQAPAEIMGHLRIRSLLAR). Residues 23 to 41 (QCLAEFLGVFVLMLLTQGA) form a helical membrane-spanning segment. The Extracellular portion of the chain corresponds to 42 to 55 (VAQAVTSGETKGNF). Residues 56-75 (FTMFLAGSLAVTIAIYVGGN) traverse the membrane as a helical segment. Over 76–77 (VS) the chain is Cytoplasmic. Residues 78–90 (GAHLNPAFSLAMC) constitute an intramembrane region (discontinuously helical). The NPA 1 motif lies at 82–84 (NPA). Over 91–96 (IVGRLP) the chain is Cytoplasmic. Residues 97 to 121 (WVKLPIYILVQLLSAFCASGATYVL) traverse the membrane as a helical segment. Residues 122–158 (YHDALQNYTGGNLTVTGPKETASIFATYPAPYLSLNN) are Extracellular-facing. 2 N-linked (GlcNAc...) asparagine glycosylation sites follow: Asn128 and Asn133. Residues 159–176 (GFLDQVLGTGMLIVGLLA) form a helical membrane-spanning segment. At 177 to 188 (ILDRRNKGVPAG) the chain is on the cytoplasmic side. The chain crosses the membrane as a helical span at residues 189-205 (LEPVVVGMLILALGLSM). The Extracellular portion of the chain corresponds to 206–208 (GAN). The segment at residues 209-223 (CGIPLNPARDLGPRL) is an intramembrane region (discontinuously helical). Residues 214 to 216 (NPA) carry the NPA 2 motif. Residues 224 to 241 (FTYVAGWGPEVFSAGNGW) are Extracellular-facing. A helical transmembrane segment spans residues 242-262 (WWVPVVAPLVGATVGTATYQL). Residues 263–301 (LVALHHPEGPEPAQDLVSAQHKASELETPASAQMLECKL) lie on the Cytoplasmic side of the membrane.

It belongs to the MIP/aquaporin (TC 1.A.8) family. In terms of assembly, homotetramer; each monomer provides an independent glycerol/water pore. N-glycosylation at Asn-133 increases the stability of the protein but has no effect on its activity. Detected in epithelial cells on villi in the ileum, and also in stomach, jejunum, colon, rectum, white adipose tissue and placenta (at protein level). Expressed in duodenum and jejunum. Highest expression in absorptive epithelial cells at the tips of villi in the jejunum. Detected in subcutaneous adipose tissue.

Its subcellular location is the apical cell membrane. It localises to the cell membrane. It is found in the lipid droplet. It catalyses the reaction glycerol(in) = glycerol(out). It carries out the reaction H2O(in) = H2O(out). The catalysed reaction is urea(in) = urea(out). Its activity is regulated as follows. Glycerol transport is regulated by pH, with the porin being permeable to glycerol at pH 5.5 but not at pH 7.4. Water permeability, however, is not influenced by pH. In terms of biological role, aquaglyceroporins form homotetrameric transmembrane channels, with each monomer independently mediating glycerol and water transport across the plasma membrane along their osmotic gradient. Could also be permeable to urea. Among aquaglyceroporins, it exhibits a unique pH-gated glycerol transport activity, being more active at acidic pH. It most likely plays a central role in the efflux of glycerol formed during triglyceride hydrolysis in adipocytes and in glycerol uptake by enterocytes, as both processes occur and are stimulated at acidic pH. The sequence is that of Aquaporin-10 from Homo sapiens (Human).